A 150-amino-acid polypeptide reads, in one-letter code: UPF0756 membrane protein PM0771 (150 aa).

Helical transmembrane passes span 12 to 34 (LVVL…AAIL), 52 to 72 (HGIT…IVSG), 79 to 99 (LAVF…LVAW), and 123 to 143 (ILGV…AGIL).

It belongs to the UPF0756 family.

The protein resides in the cell membrane. The protein is UPF0756 membrane protein PM0771 of Pasteurella multocida (strain Pm70).